A 591-amino-acid chain; its full sequence is Aspartate--tRNA(Asp/Asn) ligase (591 aa).

L-aspartate is bound at residue glutamate 175. Residues 199–202 (QQFK) form an aspartate region. 2 residues coordinate L-aspartate: arginine 221 and histidine 453. 221-223 (RDE) contacts ATP. Glutamate 486 is an ATP binding site. Position 493 (arginine 493) interacts with L-aspartate. Position 538–541 (538–541 (GIDR)) interacts with ATP.

It belongs to the class-II aminoacyl-tRNA synthetase family. Type 1 subfamily. Homodimer.

The protein resides in the cytoplasm. The catalysed reaction is tRNA(Asx) + L-aspartate + ATP = L-aspartyl-tRNA(Asx) + AMP + diphosphate. Functionally, aspartyl-tRNA synthetase with relaxed tRNA specificity since it is able to aspartylate not only its cognate tRNA(Asp) but also tRNA(Asn). Reaction proceeds in two steps: L-aspartate is first activated by ATP to form Asp-AMP and then transferred to the acceptor end of tRNA(Asp/Asn). The sequence is that of Aspartate--tRNA(Asp/Asn) ligase from Roseobacter denitrificans (strain ATCC 33942 / OCh 114) (Erythrobacter sp. (strain OCh 114)).